Reading from the N-terminus, the 161-residue chain is Glutaredoxin-2, mitochondrial (161 aa).

The transit peptide at 1-19 (MLWRRAALAGTRLVWSRSG) directs the protein to the mitochondrion. The residue at position 20 (serine 20) is a Phosphoserine. The 101-residue stretch at 54 to 154 (VNQIQETISD…PLVHQCYLKK (101 aa)) folds into the Glutaredoxin domain. A [2Fe-2S] cluster-binding site is contributed by cysteine 65. Residue lysine 71 participates in glutathione binding. Position 74 is an S-glutathionyl cysteine; alternate (cysteine 74). A disulfide bridge links cysteine 74 with cysteine 77. Glutathione-binding residues include glutamine 106 and valine 118. Cysteine 150 contacts [2Fe-2S] cluster.

It belongs to the glutaredoxin family. As to quaternary structure, monomer; active form. Homodimer; inactive form. The homodimer is probably linked by 1 2Fe-2S cluster.

It is found in the mitochondrion. The 2Fe-2S present in the homodimer leads to inactivation of the enzyme. The 2Fe-2S may serve as a redox sensor: the presence of one-electron oxidants or reductants leading to the loss of the 2Fe-2S cluster, subsequent monomerization and activation of the enzyme. In terms of biological role, glutathione-dependent oxidoreductase that facilitates the maintenance of mitochondrial redox homeostasis upon induction of apoptosis by oxidative stress. Involved in response to hydrogen peroxide and regulation of apoptosis caused by oxidative stress. Acts as a very efficient catalyst of monothiol reactions because of its high affinity for protein glutathione-mixed disulfides. Can receive electrons not only from glutathione (GSH), but also from thioredoxin reductase supporting both monothiol and dithiol reactions. Efficiently catalyzes both glutathionylation and deglutathionylation of mitochondrial complex I, which in turn regulates the superoxide production by the complex. Overexpression decreases the susceptibility to apoptosis and prevents loss of cardiolipin and cytochrome c release. The protein is Glutaredoxin-2, mitochondrial (GLRX2) of Pongo abelii (Sumatran orangutan).